Reading from the N-terminus, the 318-residue chain is tRNA U34 carboxymethyltransferase (318 aa).

Residues lysine 88, tryptophan 102, lysine 107, glycine 126, 176–177 (LE), methionine 192, tyrosine 196, and arginine 311 contribute to the carboxy-S-adenosyl-L-methionine site.

This sequence belongs to the class I-like SAM-binding methyltransferase superfamily. CmoB family. In terms of assembly, homotetramer.

It carries out the reaction carboxy-S-adenosyl-L-methionine + 5-hydroxyuridine(34) in tRNA = 5-carboxymethoxyuridine(34) in tRNA + S-adenosyl-L-homocysteine + H(+). Its function is as follows. Catalyzes carboxymethyl transfer from carboxy-S-adenosyl-L-methionine (Cx-SAM) to 5-hydroxyuridine (ho5U) to form 5-carboxymethoxyuridine (cmo5U) at position 34 in tRNAs. The polypeptide is tRNA U34 carboxymethyltransferase (Pseudomonas putida (strain GB-1)).